Here is a 365-residue protein sequence, read N- to C-terminus: UDP-N-acetylglucosamine--N-acetylmuramyl-(pentapeptide) pyrophosphoryl-undecaprenol N-acetylglucosamine transferase (365 aa).

UDP-N-acetyl-alpha-D-glucosamine is bound by residues 10–12 (TGG), N128, R170, S199, I250, and Q295.

This sequence belongs to the glycosyltransferase 28 family. MurG subfamily.

The protein resides in the cell inner membrane. It catalyses the reaction di-trans,octa-cis-undecaprenyl diphospho-N-acetyl-alpha-D-muramoyl-L-alanyl-D-glutamyl-meso-2,6-diaminopimeloyl-D-alanyl-D-alanine + UDP-N-acetyl-alpha-D-glucosamine = di-trans,octa-cis-undecaprenyl diphospho-[N-acetyl-alpha-D-glucosaminyl-(1-&gt;4)]-N-acetyl-alpha-D-muramoyl-L-alanyl-D-glutamyl-meso-2,6-diaminopimeloyl-D-alanyl-D-alanine + UDP + H(+). It participates in cell wall biogenesis; peptidoglycan biosynthesis. Its function is as follows. Cell wall formation. Catalyzes the transfer of a GlcNAc subunit on undecaprenyl-pyrophosphoryl-MurNAc-pentapeptide (lipid intermediate I) to form undecaprenyl-pyrophosphoryl-MurNAc-(pentapeptide)GlcNAc (lipid intermediate II). In Chlorobium luteolum (strain DSM 273 / BCRC 81028 / 2530) (Pelodictyon luteolum), this protein is UDP-N-acetylglucosamine--N-acetylmuramyl-(pentapeptide) pyrophosphoryl-undecaprenol N-acetylglucosamine transferase.